The following is a 471-amino-acid chain: Protein hedgehog (471 aa).

Cys-85 carries the N-palmitoyl cysteine lipid modification. Glu-149, Glu-150, Asp-155, Thr-185, Glu-186, Asp-189, and Asp-191 together coordinate Ca(2+). Residue Gly-257 is the site of Cholesterol glycine ester attachment.

It belongs to the hedgehog family. Interacts with shf. Interacts with ptc and CG5504/l(2)tid. The C-terminal part of the hedgehog protein precursor displays an autoproteolysis activity that results in the cleavage of the full-length protein into two parts (N-product and C-product). In addition, the C-terminal part displays a cholesterol transferase activity that results by the covalent attachment of a cholesterol moiety to the C-terminal of the newly generated N-product. The N-product is the active species in both local and long-range signaling, whereas the C-product has no signaling activity. In terms of processing, cholesterylation is required for N-product targeting to lipid rafts and multimerization. Post-translationally, N-palmitoylation by Rasp of the hedgehog N-product, within the secretory pathway, is required for the embryonic and larval patterning activities of the hedgehog signal. In terms of tissue distribution, in embryos, expression starts at stage 5 as a few stripes at the anterior and posterior ends, this expands to 17 stripes during stages 8-11. Expression is also seen in CNS and some PNS cells until stage 13-14, and in foregut, hindgut and salivary glands. In larvae, expression is seen in the posterior compartment of the wing, leg and antennal imaginal disks. In adults, high level of expression in specific regions of the proventriculus and hindgut, with slightly lower levels of expression in the posterior midgut. Relatively low levels of expression in the anterior midgut region.

The protein localises to the nucleus. It localises to the cytoplasm. It is found in the cell membrane. It carries out the reaction glycyl-L-cysteinyl-[protein] + cholesterol + H(+) = [protein]-C-terminal glycyl cholesterol ester + N-terminal L-cysteinyl-[protein]. In terms of biological role, the C-terminal part of the hedgehog protein precursor displays an autoproteolysis activity that results in the cleavage of the full-length protein into two parts (N-product and C-product). In addition, the C-terminal part displays a cholesterol transferase activity that results by the covalent attachment of a cholesterol moiety to the C-terminal of the newly generated N-product. Once cleaved, the C-product has no signaling activity and diffuses from the cell. The dually lipidated hedgehog protein N-product is a morphogen which is essential for a variety of patterning events during development. Establishes the anterior-posterior axis of the embryonic segments and patterns the larval imaginal disks. Binds to the patched (ptc) receptor, which functions in association with smoothened (smo), to activate the transcription of target genes wingless (wg), decapentaplegic (dpp) and ptc. In the absence of hh, ptc represses the constitutive signaling activity of smo through fused (fu). Essential component of a signaling pathway which regulates the Duox-dependent gut immune response to bacterial uracil; required to activate Cad99C-dependent endosome formation, norpA-dependent Ca2+ mobilization and p38 MAPK, which are essential steps in the Duox-dependent production of reactive oxygen species (ROS) in response to intestinal bacterial infection. During photoreceptor differentiation, it up-regulates transcription of Ubr3, which in turn promotes the hh-signaling pathway by mediating the ubiquitination and degradation of cos. This is Protein hedgehog from Drosophila melanogaster (Fruit fly).